Reading from the N-terminus, the 452-residue chain is Gamma-aminobutyric acid receptor subunit delta (452 aa).

An N-terminal signal peptide occupies residues 1-24; sequence MDAPARLLAPLLLLCAQQLRGTRA. Topologically, residues 25–251 are extracellular; sequence MNDIGDYVGS…HLRRNRGVYI (227 aa). 2 N-linked (GlcNAc...) asparagine glycosylation sites follow: Asn103 and Asn106. Residues Cys164 and Cys178 are joined by a disulfide bond. Residues 252–271 form a helical membrane-spanning segment; that stretch reads IQSYMPSVLLVAMSWVSFWI. Over 272–275 the chain is Cytoplasmic; the sequence is SQAA. Residues 276 to 298 traverse the membrane as a helical segment; it reads VPARVSLGITTVLTMTTLMVSAR. The Extracellular portion of the chain corresponds to 299–308; the sequence is SSLPRASAIK. A helical transmembrane segment spans residues 309–331; sequence ALDVYFWICYVFVFAALVEYAFA. Over 332–426 the chain is Cytoplasmic; that stretch reads HFNADYRKKQ…ARLRPIDADT (95 aa). Ser390 is subject to Phosphoserine. Residues 427–449 form a helical membrane-spanning segment; that stretch reads IDIYARAVFPAAFAAVNVIYWAA. The Extracellular segment spans residues 450 to 452; the sequence is YAM.

The protein belongs to the ligand-gated ion channel (TC 1.A.9) family. Gamma-aminobutyric acid receptor (TC 1.A.9.5) subfamily. GABRD sub-subfamily. Heteropentamer, formed by a combination of alpha (GABRA1-6), beta (GABRB1-3), gamma (GABRG1-3), delta (GABRD), epsilon (GABRE), rho (GABRR1-3), pi (GABRP) and theta (GABRQ) chains, each subunit exhibiting distinct physiological and pharmacological properties.

It localises to the cell membrane. The catalysed reaction is chloride(in) = chloride(out). Its function is as follows. Delta subunit of the heteropentameric ligand-gated chloride channel gated by gamma-aminobutyric acid (GABA), a major inhibitory neurotransmitter in the brain. GABA-gated chloride channels, also named GABA(A) receptors (GABAAR), consist of five subunits arranged around a central pore and contain GABA active binding site(s) located at the alpha and beta subunit interface(s). When activated by GABA, GABAARs selectively allow the flow of chloride anions across the cell membrane down their electrochemical gradient. GABAARs containing delta/GABRD subunits are predominantly located in extrasynaptic or perisynaptic positions on hippocampus and cerebellar granule cells, and contribute to the tonic GABAergic inhibition. GABAAR containing alpha-4-beta-3-delta subunits can simultaneously bind GABA and histamine where histamine binds at the interface of two neighboring beta subunits, which may be involved in the regulation of sleep and wakefulness. This is Gamma-aminobutyric acid receptor subunit delta from Homo sapiens (Human).